Reading from the N-terminus, the 435-residue chain is MPLPIVAIVGQPNVGKSTLFNRIINERVAIVEDRPGVTRDRNYARASWMGHQFSIIDTGGITWEDSTIDEEIRAQAEIAIEEADVIVMLADASQGVTSLDERIAHLLYRADKPVLLAVNKADNPEQRTDIYDFYSLGLGDPIPVSGSHGTGIGDLLDEVVKNFSPDAEKTEEGVISFSVIGRPNVGKSSIVNRLLGEERVIVANEEGTTRDAIDTPFVKDGTKFRVVDTAGIRRRGKVYEKTEKYSVMRAMSAMERSDVAILVLDASTGIREQDKHVAGYAHEAGLGMIIAVNKWDLPKKDSSSGKDFEAVIREEFSYLDYAPIVFVSAKTGKNIDQLPKMVKEVYENKNQRIQSSVLNDLLLEASRLVPAPMVKGKRLRVYYMTQVKTNPPTFVVFCNDPELMHFSYQRFLINQLRENFDFTGTPIKILPRKRK.

EngA-type G domains lie at 4–167 and 175–350; these read PIVA…SPDA and ISFS…ENKN. Residues 10–17, 57–61, 119–122, 181–188, 228–232, and 293–296 each bind GTP; these read GQPNVGKS, DTGGI, NKAD, GRPNVGKS, DTAGI, and NKWD. Residues 351 to 435 enclose the KH-like domain; that stretch reads QRIQSSVLND…PIKILPRKRK (85 aa).

This sequence belongs to the TRAFAC class TrmE-Era-EngA-EngB-Septin-like GTPase superfamily. EngA (Der) GTPase family. As to quaternary structure, associates with the 50S ribosomal subunit.

GTPase that plays an essential role in the late steps of ribosome biogenesis. The polypeptide is GTPase Der (Lactobacillus delbrueckii subsp. bulgaricus (strain ATCC 11842 / DSM 20081 / BCRC 10696 / JCM 1002 / NBRC 13953 / NCIMB 11778 / NCTC 12712 / WDCM 00102 / Lb 14)).